Reading from the N-terminus, the 643-residue chain is MSRPSTPLLDKAPTPDRLRALPEQDLPQLAEELRTELIDAVSTTGGHLGAGLGVVELTVALHHVFNTPYDRIIWDVGHQAYPHKILTGRRDRIRTLRQAGGLSGFTKRAESEYDPFGAAHSSTSISAGLGMAVASELSGEKRNVIAVIGDGSMSAGMAYEAMNNAGALDARLIVILNDNDMSIAPPTGAMSAYLARLVSGRTYRSVREAAKQVAQKLPKFLQDKARKSEEYARAFFTGGTLFEELGFYYVGPIDGHNLDHLLPVLKNVRDTQKGPVLIHVVTQKGKGYAPAEAAADKYHGVNKFDVITGKQAKPPANVPSYTKIFGTSLIEEARHDDKIVAVTAAMPTGTGLDLFGEAFPKRVFDVGIAEQHAVTFAAGLASEGYKPFCAIYSTFLQRGYDQVVHDVSIQNLPVRFPIDRAGLVGADGPTHAGSFDTGFLAALPGFVVMAASDEAELRHMVRTAAEYDEGPISFRYPRGDGVGVDLPERGSVLEIGKGRIVREGTKVALLSFGTRLQECLAAAEELGAAGLSTTVADARFAKPLDHDLIRRLAREHEVLVMVEEGAVGGFGSHVLQFLATDGLLDRGLKVRALTLPDIYQDHGKPDAMYAEAGLDRTGIVRTVFAALHRDELGHEALPTPFRA.

Thiamine diphosphate-binding positions include His78 and 119-121; that span reads AHS. Mg(2+) is bound at residue Asp150. Thiamine diphosphate contacts are provided by residues 151-152, Asn179, Tyr288, and Glu370; that span reads GS. Residue Asn179 participates in Mg(2+) binding.

The protein belongs to the transketolase family. DXPS subfamily. In terms of assembly, homodimer. It depends on Mg(2+) as a cofactor. Thiamine diphosphate serves as cofactor.

The catalysed reaction is D-glyceraldehyde 3-phosphate + pyruvate + H(+) = 1-deoxy-D-xylulose 5-phosphate + CO2. The protein operates within metabolic intermediate biosynthesis; 1-deoxy-D-xylulose 5-phosphate biosynthesis; 1-deoxy-D-xylulose 5-phosphate from D-glyceraldehyde 3-phosphate and pyruvate: step 1/1. Functionally, catalyzes the acyloin condensation reaction between C atoms 2 and 3 of pyruvate and glyceraldehyde 3-phosphate to yield 1-deoxy-D-xylulose-5-phosphate (DXP). This Brucella canis (strain ATCC 23365 / NCTC 10854 / RM-666) protein is 1-deoxy-D-xylulose-5-phosphate synthase.